Reading from the N-terminus, the 300-residue chain is Protease HtpX homolog (300 aa).

2 helical membrane-spanning segments follow: residues 5–25 (IFLL…FISL) and 41–61 (TLFL…LAIS). Residue H146 coordinates Zn(2+). E147 is an active-site residue. H150 contacts Zn(2+). The next 2 membrane-spanning stretches (helical) occupy residues 161–181 (LLQG…GFFV) and 196–216 (IGFY…ASII). E225 is a Zn(2+) binding site.

This sequence belongs to the peptidase M48B family. The cofactor is Zn(2+).

It localises to the cell inner membrane. This chain is Protease HtpX homolog, found in Methylacidiphilum infernorum (isolate V4) (Methylokorus infernorum (strain V4)).